The chain runs to 178 residues: CDP-archaeol synthase (178 aa).

A run of 5 helical transmembrane segments spans residues 3-23, 55-75, 91-111, 125-145, and 149-169; these read IIYL…ANAT, TFFG…IFNL, GIVG…GSFI, ILDQ…FAPV, and MGIF…IIAY.

This sequence belongs to the CDP-archaeol synthase family. Mg(2+) is required as a cofactor.

It localises to the cell membrane. It catalyses the reaction 2,3-bis-O-(geranylgeranyl)-sn-glycerol 1-phosphate + CTP + H(+) = CDP-2,3-bis-O-(geranylgeranyl)-sn-glycerol + diphosphate. The protein operates within membrane lipid metabolism; glycerophospholipid metabolism. Catalyzes the formation of CDP-2,3-bis-(O-geranylgeranyl)-sn-glycerol (CDP-archaeol) from 2,3-bis-(O-geranylgeranyl)-sn-glycerol 1-phosphate (DGGGP) and CTP. This reaction is the third ether-bond-formation step in the biosynthesis of archaeal membrane lipids. The sequence is that of CDP-archaeol synthase from Methanococcus aeolicus (strain ATCC BAA-1280 / DSM 17508 / OCM 812 / Nankai-3).